We begin with the raw amino-acid sequence, 168 residues long: Envelope glycoprotein L (168 aa).

The N-terminal stretch at 1 to 22 (MMWKWVTLLLFVLVCGDNPVNA) is a signal peptide. The tract at residues 25–138 (HNPFVCCHQK…TDSSGFKNNL (114 aa)) is interaction with gH.

This sequence belongs to the herpesviridae glycoprotein L family. Interacts with glycoprotein H (gH); this interaction is necessary for the correct processing and cell surface expression of gH. The heterodimer gH/gL seems to interact with gB trimers during fusion.

Its subcellular location is the virion membrane. It localises to the host cell membrane. It is found in the host Golgi apparatus. The protein localises to the host trans-Golgi network. In terms of biological role, the heterodimer glycoprotein H-glycoprotein L is required for the fusion of viral and plasma membranes leading to virus entry into the host cell. Acts as a functional inhibitor of gH and maintains gH in an inhibited form. Upon binding to host integrins, gL dissociates from gH leading to activation of the viral fusion glycoproteins gB and gH. This is Envelope glycoprotein L from Connochaetes taurinus (Blue wildebeest).